The chain runs to 192 residues: T-cell surface glycoprotein CD3 epsilon chain (192 aa).

A signal peptide spans Met1–Ala21. Residues Gln22 to Asn111 lie on the Extracellular side of the membrane. The region spanning Gln27–Tyr98 is the Ig-like domain. Cys43 and Cys84 are oxidised to a cystine. A helical membrane pass occupies residues Leu112–Ser137. Over Lys138 to Val192 the chain is Cytoplasmic. A disordered region spans residues Pro146–Val192. Positions Gln160 to Arg177 are NUMB-binding region. An ITAM domain is found at Glu163–Arg190. The tract at residues Arg164–Pro171 is proline-rich sequence. Phosphotyrosine occurs at positions 173 and 184.

The TCR-CD3 complex is composed of a CD3D/CD3E and a CD3G/CD3E heterodimers that preferentially associate with TCRalpha and TCRbeta, respectively, to form TCRalpha/CD3E/CD3G and TCRbeta/CD3G/CD3E trimers. In turn, the hexamer interacts with CD3Z homodimer to form the TCR-CD3 complex. Alternatively, TCRalpha and TCRbeta can be replaced by TCRgamma and TCRdelta. Interacts with CD6. Interacts (via Proline-rich sequence) with NCK1; the interaction is ligand dependent but independent of tyrosine kinase activation. In terms of processing, phosphorylated on Tyr residues after T-cell receptor triggering by LCK in association with CD4/CD8.

The protein resides in the cell membrane. Part of the TCR-CD3 complex present on T-lymphocyte cell surface that plays an essential role in adaptive immune response. When antigen presenting cells (APCs) activate T-cell receptor (TCR), TCR-mediated signals are transmitted across the cell membrane by the CD3 chains CD3D, CD3E, CD3G and CD3Z. All CD3 chains contain immunoreceptor tyrosine-based activation motifs (ITAMs) in their cytoplasmic domain. Upon TCR engagement, these motifs become phosphorylated by Src family protein tyrosine kinases LCK and FYN, resulting in the activation of downstream signaling pathways. In addition of this role of signal transduction in T-cell activation, CD3E plays an essential role in correct T-cell development. Also participates in internalization and cell surface down-regulation of TCR-CD3 complexes via endocytosis sequences present in CD3E cytosolic region. In addition to its role as a TCR coreceptor, it serves as a receptor for ITPRIPL1. Ligand recognition inhibits T-cell activation by promoting interaction with NCK1, which prevents CD3E-ZAP70 interaction and blocks the ERK-NFkB signaling cascade and calcium influx. The protein is T-cell surface glycoprotein CD3 epsilon chain (CD3E) of Ovis aries (Sheep).